The primary structure comprises 62 residues: uncharacterized protein (62 aa).

A signal peptide spans 1 to 22; sequence MVNVALLLDQIIATPLRSMVEA.

This is an uncharacterized protein from Archaeoglobus fulgidus (strain ATCC 49558 / DSM 4304 / JCM 9628 / NBRC 100126 / VC-16).